The following is a 638-amino-acid chain: 3D-(3,5/4)-trihydroxycyclohexane-1,2-dione hydrolase (638 aa).

Residue Glu67 participates in thiamine diphosphate binding. Residues 442–523 (SLPGDLQRLW…INIMLFDNSG (82 aa)) are thiamine pyrophosphate binding. Mg(2+)-binding residues include Asp494 and Asn521.

The protein belongs to the TPP enzyme family. Mg(2+) is required as a cofactor. Requires thiamine diphosphate as cofactor.

It carries out the reaction 3D-3,5/4-trihydroxycyclohexane-1,2-dione + H2O = 5-deoxy-D-glucuronate + H(+). It participates in polyol metabolism; myo-inositol degradation into acetyl-CoA; acetyl-CoA from myo-inositol: step 3/7. Its function is as follows. Involved in the cleavage of the C1-C2 bond of 3D-(3,5/4)-trihydroxycyclohexane-1,2-dione (THcHDO) to yield 5-deoxy-glucuronate (5DG). The polypeptide is 3D-(3,5/4)-trihydroxycyclohexane-1,2-dione hydrolase (Listeria monocytogenes serovar 1/2a (strain ATCC BAA-679 / EGD-e)).